A 431-amino-acid chain; its full sequence is Enolase (431 aa).

(2R)-2-phosphoglycerate is bound at residue Gln163. The Proton donor role is filled by Glu205. Mg(2+) contacts are provided by Asp242, Glu288, and Asp315. (2R)-2-phosphoglycerate is bound by residues Lys340, Arg369, Ser370, and Lys391. The Proton acceptor role is filled by Lys340.

This sequence belongs to the enolase family. It depends on Mg(2+) as a cofactor.

It localises to the cytoplasm. The protein resides in the secreted. Its subcellular location is the cell surface. It catalyses the reaction (2R)-2-phosphoglycerate = phosphoenolpyruvate + H2O. It participates in carbohydrate degradation; glycolysis; pyruvate from D-glyceraldehyde 3-phosphate: step 4/5. Catalyzes the reversible conversion of 2-phosphoglycerate (2-PG) into phosphoenolpyruvate (PEP). It is essential for the degradation of carbohydrates via glycolysis. The sequence is that of Enolase from Bacillus cereus (strain G9842).